Here is a 155-residue protein sequence, read N- to C-terminus: Zinc finger HIT domain-containing protein 3 (155 aa).

Zn(2+)-binding residues include Cys11, Cys14, Cys22, Cys25, Cys30, Cys34, His38, and Cys42. The segment at 11–42 (CVICLEKPKYRCPACRVPYCSVVCFRKHKEQC) adopts an HIT-type zinc-finger fold. Ser80 carries the post-translational modification Phosphoserine.

In terms of assembly, thyroid receptor interacting proteins (TRIPs) specifically interact with the ligand binding domain of the thyroid receptor (TR). Requires the presence of thyroid hormone for its interaction. Interacts with NUFIP1. Interacts (via HIT-type zinc finger) with the RUVBL1/RUVBL2 complex in the presence of ADP.

Its subcellular location is the cytoplasm. It is found in the nucleus. The sequence is that of Zinc finger HIT domain-containing protein 3 (ZNHIT3) from Homo sapiens (Human).